The sequence spans 310 residues: MFKFQKEQEIVNIAGVKIGGQPGELPTVLAGTIFYDKHEIVKDVARGLFDRDAAEKLINLQESSAEETGNPYIIHIFGTTPESITRYIDFVAEISEAPFLIDSPEGTVRSHAAEYVSEIGLADKAIYNSINMSINASEIEALALSDIDSSIILGFNAMDSSLQGRMEMLENGAGLLEEGLLSIADRCGIVNKLIDPSITPMGNGAGVALKMTITAKAKWGHPTGSGIHNAPSAWNWLNKKKEKDPVLYKICDVGSTCLQQAAAGDFILYGPIEYAPYIFPMAAMSDIMISEAVADLGIEPASRHPLNLLV.

It belongs to the MtrH family. As to quaternary structure, may be part of a complex composed of 3 subunits; MtxA, MtxH and MtxX.

This chain is Putative methyltransferase mtx subunit H (mtxH), found in Methanosarcina barkeri (strain Fusaro / DSM 804).